The sequence spans 212 residues: Thymidylate kinase (212 aa).

Gly-10–Thr-17 lines the ATP pocket.

It belongs to the thymidylate kinase family.

The enzyme catalyses dTMP + ATP = dTDP + ADP. Its function is as follows. Phosphorylation of dTMP to form dTDP in both de novo and salvage pathways of dTTP synthesis. This chain is Thymidylate kinase, found in Yersinia pseudotuberculosis serotype O:3 (strain YPIII).